The chain runs to 61 residues: Probable tautomerase SMU_1087 (61 aa).

Residue P2 is the Proton acceptor; via imino nitrogen of the active site.

It belongs to the 4-oxalocrotonate tautomerase family.

This chain is Probable tautomerase SMU_1087, found in Streptococcus mutans serotype c (strain ATCC 700610 / UA159).